The sequence spans 181 residues: Protein Syd (181 aa).

The protein belongs to the Syd family.

It is found in the cell inner membrane. In terms of biological role, interacts with the SecY protein in vivo. May bind preferentially to an uncomplexed state of SecY, thus functioning either as a chelating agent for excess SecY in the cell or as a regulatory factor that negatively controls the translocase function. This chain is Protein Syd, found in Salmonella agona (strain SL483).